Here is a 256-residue protein sequence, read N- to C-terminus: Triosephosphate isomerase (256 aa).

Residue 12-14 (NWK) coordinates substrate. H99 (electrophile) is an active-site residue. E169 serves as the catalytic Proton acceptor. Residues G175, S214, and 235-236 (GG) each bind substrate.

This sequence belongs to the triosephosphate isomerase family. As to quaternary structure, homodimer.

The protein localises to the cytoplasm. It carries out the reaction D-glyceraldehyde 3-phosphate = dihydroxyacetone phosphate. It functions in the pathway carbohydrate biosynthesis; gluconeogenesis. It participates in carbohydrate degradation; glycolysis; D-glyceraldehyde 3-phosphate from glycerone phosphate: step 1/1. In terms of biological role, involved in the gluconeogenesis. Catalyzes stereospecifically the conversion of dihydroxyacetone phosphate (DHAP) to D-glyceraldehyde-3-phosphate (G3P). This chain is Triosephosphate isomerase, found in Mesorhizobium japonicum (strain LMG 29417 / CECT 9101 / MAFF 303099) (Mesorhizobium loti (strain MAFF 303099)).